A 158-amino-acid chain; its full sequence is C-type lectin BiL (158 aa).

An N-terminal signal peptide occupies residues 1 to 23 (MGRFIFVSFGLLVVFLSLSGAKG). Cystine bridges form between Cys-26–Cys-37, Cys-54–Cys-154, Cys-61–Cys-156, and Cys-129–Cys-146. A C-type lectin domain is found at 33–155 (MNGLCYKIFD…CESKNAFLCQ (123 aa)). Positions 119, 121, 127, 142, and 143 each coordinate Ca(2+). A Galactose-binding motif is present at residues 119 to 121 (QPD).

Homodimer; disulfide-linked. Expressed by the venom gland.

It is found in the secreted. In terms of biological role, lectin with a hemagglutinating activity that is inhibited by galactose, lactose and EDTA. Is calcium-dependent. Shows effects on the renal function of isolated perfused rat kidneys by increasing both perfusion pressure (PP) and renal vascular resistance (RVR). In addition, the urinary flow and glomerular filtration rate (GFR) decreases significantly. The changes observed may reflect direct injury to the glomerular and tubular renal cells, and the rise in permeability in the glomerular endothelial cells, may be the effect of interactions of C-type lectin with endothelial cells or due to release of other mediators by mesangial, tubular and endothelial cells. This is C-type lectin BiL from Bothrops insularis (Golden lancehead).